We begin with the raw amino-acid sequence, 160 residues long: Prostaglandin E synthase 3 (160 aa).

The CS domain occupies 1-90; the sequence is MQPASAKWYD…ESGQSWPRLT (90 aa). Lys-33 carries the post-translational modification N6-acetyllysine. Lys-35 participates in a covalent cross-link: Glycyl lysine isopeptide (Lys-Gly) (interchain with G-Cter in SUMO2). Ser-44 is modified (phosphoserine). Lys-65 is covalently cross-linked (Glycyl lysine isopeptide (Lys-Gly) (interchain with G-Cter in SUMO2)). Phosphoserine is present on residues Ser-85, Ser-100, Ser-113, and Ser-118. The interval 118–160 is disordered; that stretch reads SNFDRFSEMMDHMGGDEDVDLPEVDGADDDSQDSDDEKMPDLE. Positions 122 to 132 are enriched in basic and acidic residues; sequence RFSEMMDHMGG. Positions 133–153 are enriched in acidic residues; it reads DEDVDLPEVDGADDDSQDSDD. 2 positions are modified to phosphoserine: Ser-148 and Ser-151. The PXLE motif signature appears at 157 to 160; the sequence is PDLE.

It belongs to the p23/wos2 family. Probably forms a complex composed of chaperones HSP90 and HSP70, co-chaperones STIP1/HOP, CDC37, PPP5C, PTGES3/p23, TSC1 and client protein TSC2. Binds to the progesterone receptor. Interacts with TERT; the interaction, together with HSP90AA1, is required for correct assembly and stabilization of the telomerase holoenzyme complex. Interacts (via PXLE motif) with EGLN1/PHD2, recruiting EGLN1/PHD2 to the HSP90 pathway to facilitate HIF alpha proteins hydroxylation. Interacts with HSP90AA1, FLCN, FNIP1 and FNIP2. Post-translationally, proteolytically cleaved by caspase-7 (CASP7) in response to apoptosis, leading to its inactivation. As to expression, expressed in testis, kidney, bladder and ovary.

The protein localises to the cytoplasm. The enzyme catalyses prostaglandin H2 = prostaglandin E2. The protein operates within lipid metabolism; prostaglandin biosynthesis. Cytosolic prostaglandin synthase that catalyzes the oxidoreduction of prostaglandin endoperoxide H2 (PGH2) to prostaglandin E2 (PGE2). Molecular chaperone that localizes to genomic response elements in a hormone-dependent manner and disrupts receptor-mediated transcriptional activation, by promoting disassembly of transcriptional regulatory complexes. Facilitates HIF alpha proteins hydroxylation via interaction with EGLN1/PHD2, leading to recruit EGLN1/PHD2 to the HSP90 pathway. The polypeptide is Prostaglandin E synthase 3 (Ptges3) (Mus musculus (Mouse)).